Consider the following 219-residue polypeptide: Cytidylate kinase (219 aa).

Position 15 to 23 (15 to 23 (GPAASGKGT)) interacts with ATP.

It belongs to the cytidylate kinase family. Type 1 subfamily.

Its subcellular location is the cytoplasm. It catalyses the reaction CMP + ATP = CDP + ADP. The catalysed reaction is dCMP + ATP = dCDP + ADP. This is Cytidylate kinase from Brucella suis biovar 1 (strain 1330).